A 1181-amino-acid polypeptide reads, in one-letter code: Integrin alpha-2 (1181 aa).

Positions 1–29 (MGPERTGAAPLPLLLVLALSQGILNCCLA) are cleaved as a signal peptide. The Extracellular segment spans residues 30–1132 (YNVGLPEAKI…KPDEKAEVPT (1103 aa)). FG-GAP repeat units lie at residues 34–92 (LPEA…TATC) and 101–161 (TSIP…LSAS). Residues Cys-83 and Cys-92 are joined by a disulfide bond. N-linked (GlcNAc...) asparagine glycosylation is found at Asn-105, Asn-112, and Asn-343. The VWFA domain occupies 188 to 365 (WDAVKNFLEK…TLGEQIFSIE (178 aa)). FG-GAP repeat units follow at residues 366–420 (GTVQ…LIFP), 423–475 (AFDQ…ENGN), 477–539 (TVIQ…ILGQ), 540–598 (HQFL…TIRT), and 602–664 (QKIL…FTPE). N-linked (GlcNAc...) asparagine glycosylation is found at Asn-432, Asn-460, and Asn-475. Ca(2+) contacts are provided by Asp-499, Asp-501, Asp-503, Asp-507, Asp-563, Asn-565, Asp-567, Asp-571, Asp-627, Asn-629, Asp-631, and Asp-635. 5 disulfides stabilise this stretch: Cys-680–Cys-737, Cys-789–Cys-795, Cys-865–Cys-876, Cys-1019–Cys-1050, and Cys-1055–Cys-1060. A glycan (N-linked (GlcNAc...) asparagine) is linked at Asn-699. 3 N-linked (GlcNAc...) asparagine glycosylation sites follow: Asn-1057, Asn-1074, and Asn-1081. The helical transmembrane segment at 1133–1154 (GVIIGSIIAGILLLLALVAILW) threads the bilayer. The tract at residues 1155-1161 (KLGFFKR) is interaction with HPS5. At 1155–1181 (KLGFFKRKYEKMTKNPDEIDETTELSS) the chain is on the cytoplasmic side. The GFFKR motif signature appears at 1157-1161 (GFFKR).

This sequence belongs to the integrin alpha chain family. As to quaternary structure, heterodimer of an alpha and a beta subunit. Alpha-2 associates with beta-1. Interacts with HPS5 and RAB21. In terms of assembly, (Microbial infection) Integrin ITGA2:ITGB1 interacts (via ITAG2 I-domain) with rotavirus A VP4 protein. (Microbial infection) Integrin ITGA2:ITGB1 interacts with human echoviruses 1 and 8 capsid proteins.

It is found in the membrane. Its function is as follows. Integrin alpha-2/beta-1 is a receptor for laminin, collagen, collagen C-propeptides, fibronectin and E-cadherin. It recognizes the proline-hydroxylated sequence G-F-P-G-E-R in collagen. It is responsible for adhesion of platelets and other cells to collagens, modulation of collagen and collagenase gene expression, force generation and organization of newly synthesized extracellular matrix. Functionally, (Microbial infection) Integrin ITGA2:ITGB1 acts as a receptor for Human rotavirus A. (Microbial infection) Integrin ITGA2:ITGB1 acts as a receptor for Human echoviruses 1 and 8. This Homo sapiens (Human) protein is Integrin alpha-2 (ITGA2).